An 86-amino-acid chain; its full sequence is Large ribosomal subunit protein eL20 (86 aa).

The protein belongs to the eukaryotic ribosomal protein eL20 family. As to quaternary structure, part of the 50S ribosomal subunit. Binds 23S rRNA.

In Sulfolobus acidocaldarius (strain ATCC 33909 / DSM 639 / JCM 8929 / NBRC 15157 / NCIMB 11770), this protein is Large ribosomal subunit protein eL20.